Consider the following 734-residue polypeptide: Photosystem I P700 chlorophyll a apoprotein A2 (734 aa).

8 helical membrane-spanning segments follow: residues 46–69 (IFAS…FHVA), 135–158 (LYSG…LHLQ), 175–199 (LNHH…HVAI), 273–291 (MAHH…GHMY), 330–353 (IHFQ…QHMY), 369–395 (AALY…IFFI), 417–439 (AIIS…LYVH), and 517–535 (FLVH…LILV). [4Fe-4S] cluster contacts are provided by C559 and C568. 2 helical membrane-spanning segments follow: residues 575 to 596 (AFYL…YWHW) and 643 to 665 (LSVW…MFLI). Residues H654, M662, and Y670 each contribute to the chlorophyll a site. Phylloquinone is bound at residue W671. A helical membrane pass occupies residues 707–727 (LVGLAHFSVGYIFTYAAFLIA).

It belongs to the PsaA/PsaB family. The PsaA/B heterodimer binds the P700 chlorophyll special pair and subsequent electron acceptors. PSI consists of a core antenna complex that captures photons, and an electron transfer chain that converts photonic excitation into a charge separation. The eukaryotic PSI reaction center is composed of at least 11 subunits. P700 is a chlorophyll a/chlorophyll a' dimer, A0 is one or more chlorophyll a, A1 is one or both phylloquinones and FX is a shared 4Fe-4S iron-sulfur center. is required as a cofactor.

The protein localises to the plastid. It localises to the chloroplast thylakoid membrane. It catalyses the reaction reduced [plastocyanin] + hnu + oxidized [2Fe-2S]-[ferredoxin] = oxidized [plastocyanin] + reduced [2Fe-2S]-[ferredoxin]. Its function is as follows. PsaA and PsaB bind P700, the primary electron donor of photosystem I (PSI), as well as the electron acceptors A0, A1 and FX. PSI is a plastocyanin-ferredoxin oxidoreductase, converting photonic excitation into a charge separation, which transfers an electron from the donor P700 chlorophyll pair to the spectroscopically characterized acceptors A0, A1, FX, FA and FB in turn. Oxidized P700 is reduced on the lumenal side of the thylakoid membrane by plastocyanin. This chain is Photosystem I P700 chlorophyll a apoprotein A2, found in Lotus japonicus (Lotus corniculatus var. japonicus).